Reading from the N-terminus, the 424-residue chain is Gamma-glutamyl phosphate reductase (424 aa).

This sequence belongs to the gamma-glutamyl phosphate reductase family.

It localises to the cytoplasm. The catalysed reaction is L-glutamate 5-semialdehyde + phosphate + NADP(+) = L-glutamyl 5-phosphate + NADPH + H(+). It functions in the pathway amino-acid biosynthesis; L-proline biosynthesis; L-glutamate 5-semialdehyde from L-glutamate: step 2/2. Its function is as follows. Catalyzes the NADPH-dependent reduction of L-glutamate 5-phosphate into L-glutamate 5-semialdehyde and phosphate. The product spontaneously undergoes cyclization to form 1-pyrroline-5-carboxylate. The protein is Gamma-glutamyl phosphate reductase of Dehalococcoides mccartyi (strain ATCC BAA-2266 / KCTC 15142 / 195) (Dehalococcoides ethenogenes (strain 195)).